The primary structure comprises 125 residues: Fumarate reductase subunit D (125 aa).

3 helical membrane-spanning segments follow: residues 30–50 (FAMLTPITVLVLGILVPLGVI), 62–82 (AFATSIIGALFIIGTLALPMW), and 105–125 (VACYAFAGLITALAVIFIFMI).

The protein belongs to the FrdD family. Part of an enzyme complex containing four subunits: a flavoprotein (FrdA), an iron-sulfur protein (FrdB), and two hydrophobic anchor proteins (FrdC and FrdD).

Its subcellular location is the cell inner membrane. Its function is as follows. Anchors the catalytic components of the fumarate reductase complex to the cell membrane, binds quinones. The sequence is that of Fumarate reductase subunit D from Vibrio parahaemolyticus serotype O3:K6 (strain RIMD 2210633).